A 399-amino-acid polypeptide reads, in one-letter code: RNA-binding protein cabeza (399 aa).

Residues 1-12 are compositionally biased toward gly residues; it reads MERGGYGGGSGQ. Residues 1–82 form a disordered region; sequence MERGGYGGGS…RGGNSYGNGG (82 aa). Over residues 24 to 34 the composition is skewed to polar residues; that stretch reads YQQMPNKTGNY. Residues 43–69 are compositionally biased toward gly residues; it reads KQGGGYDSGSGHRGSGGSGNGGGGGGS. Residues 120–206 enclose the RRM domain; it reads DTIFVSGMDP…NAIKVSLAQR (87 aa). Disordered regions lie at residues 209–276 and 300–399; these read NWNK…QPRD and TPKG…SRPY. The segment covering 212 to 271 has biased composition (gly residues); sequence KGGGGGGGGGGRGGFGGRRGGGGGGGGGGGGGGRFDRGGGGGGGRYDRGGGGGGGGGGGN. Residues 275-304 form a RanBP2-type zinc finger; sequence RDGDWKCNSCNNTNFAWRNECNRCKTPKGD. Composition is skewed to gly residues over residues 308–339, 347–361, and 368–380; these read SSGGGGGGGYGGGGGGGGYDRGNDRGSGGGGY, NSQGGGGGGGGGGGY, and NGGGRGGRGGGGG. Residues 387-399 show a composition bias toward low complexity; sequence PMRNDGGMRSRPY.

This sequence belongs to the RRM TET family. As to expression, ubiquitous. Enriched in the brain and central nervous system during embryogenesis. Enriched in the adult head. Embryos contain both isoforms A and B, whereas later in development (heads and torsos) only isoform B is detected.

The protein localises to the nucleus. Its function is as follows. May participate in a function common to the expression of most genes transcribed by RNA polymerase II. In Drosophila melanogaster (Fruit fly), this protein is RNA-binding protein cabeza (caz).